Consider the following 72-residue polypeptide: Alpha-elapitoxin-Dpp2d (72 aa).

Intrachain disulfides connect C3–C21, C14–C42, C27–C31, C46–C57, and C58–C63. At R72 the chain carries Arginine amide.

This sequence belongs to the three-finger toxin family. Long-chain subfamily. Type II alpha-neurotoxin sub-subfamily. As to quaternary structure, monomer (predominant). In terms of processing, amidation does not significantly affect toxin selectivity, since the activity profile and binding data are reminiscent of classical long-chain 3-finger toxins with a free carboxyl termini. As to expression, expressed by the venom gland.

Its subcellular location is the secreted. In terms of biological role, binds with high affinity to muscular (IC(50)=114 nM) and neuronal (alpha-7/CHRNA7) (IC(50)=58 nM) nicotinic acetylcholine receptor (nAChR) and inhibits acetylcholine from binding to the receptor, thereby impairing neuromuscular and neuronal transmission. Competitive radioligand binding assays also demonstrate that this toxin competes with epibatidine binding to the Lymnaea stagnalis acetylcholine-binding protein (Ls-AChBP) (IC(50)=4.9 nM). The chain is Alpha-elapitoxin-Dpp2d from Dendroaspis polylepis polylepis (Black mamba).